The primary structure comprises 142 residues: Cellulose/chitin binding protein BQ2027_MB2009 (142 aa).

An N-terminal signal peptide occupies residues 1-37 (MAGLNIYVRRWRTALHATVSALIVAILGLAITPVASA). Residues 38–142 (ATARATLSVT…CLLNGQYPCT (105 aa)) form the CBM2 domain.

The protein resides in the secreted. It localises to the cell wall. The protein localises to the cell membrane. Carbohydrate binding protein that binds chitin and cellulose. Lacks enzymatic activity and does not hydrolyze chitin and cellulose. May interact with mycobacterial biofilms, which are rich in cellulose, and play a role in biofilm formation. Could also act as an adhesin, improving the initial attachment to host cells and aiding M.bovis during the initial stages of infection. Functionally, may act as a virulence factor that modulates host immune responses and contributes to host immune evasion. This is Cellulose/chitin binding protein BQ2027_MB2009 from Mycobacterium bovis (strain ATCC BAA-935 / AF2122/97).